Here is a 199-residue protein sequence, read N- to C-terminus: Tegument protein UL14 homolog (199 aa).

Residues threonine 176–asparagine 191 are compositionally biased toward polar residues. Residues threonine 176–valine 199 are disordered.

Belongs to the alphaherpesvirinae HHV-1 UL14 protein family.

Its subcellular location is the virion tegument. It is found in the host cytoplasm. The protein resides in the host nucleus. Its function is as follows. Contributes to the nuclear transport of the viral transcriptional activator VP16 homolog during the early phase of infection. Therefore, participates indirectly in the regulation of the immediate-early gene expression. Additionally, seems to be important for efficient nuclear targeting of capsids. This chain is Tegument protein UL14 homolog, found in Varicella-zoster virus (strain Dumas) (HHV-3).